A 323-amino-acid polypeptide reads, in one-letter code: Cyclin-dependent kinase 1 (323 aa).

The Protein kinase domain occupies 4–306 (YQKIEKIGEG…AKQACMHPYF (303 aa)). Residues 10–18 (IGEGTYGVV) and Lys-34 contribute to the ATP site. Residue Thr-14 is modified to Phosphothreonine. A Phosphotyrosine modification is found at Tyr-15. Catalysis depends on Asp-147, which acts as the Proton acceptor. Thr-180 carries the phosphothreonine; by CAK modification.

Belongs to the protein kinase superfamily. CMGC Ser/Thr protein kinase family. CDC2/CDKX subfamily. In terms of assembly, forms a stable but non-covalent complex with a regulatory subunit (SUC1) and with a cyclin.

The catalysed reaction is L-seryl-[protein] + ATP = O-phospho-L-seryl-[protein] + ADP + H(+). It carries out the reaction L-threonyl-[protein] + ATP = O-phospho-L-threonyl-[protein] + ADP + H(+). With respect to regulation, phosphorylation at Thr-14 or Tyr-15 inactivates the enzyme, while phosphorylation at Thr-180 activates it. Its function is as follows. Cyclin-dependent kinase that acts as a master regulator of the mitotic and meiotic cell cycles. This Emericella nidulans (strain FGSC A4 / ATCC 38163 / CBS 112.46 / NRRL 194 / M139) (Aspergillus nidulans) protein is Cyclin-dependent kinase 1.